We begin with the raw amino-acid sequence, 139 residues long: Ribonuclease VapC39 (139 aa).

One can recognise a PINc domain in the interval 4-133 (LLDVNVLIAL…DAALADSASA (130 aa)). Mg(2+) contacts are provided by D6 and D106.

Belongs to the PINc/VapC protein family. It depends on Mg(2+) as a cofactor.

Toxic component of a type II toxin-antitoxin (TA) system. An RNase. Its toxic effect is neutralized by coexpression with cognate antitoxin VapB39. The chain is Ribonuclease VapC39 from Mycobacterium tuberculosis (strain CDC 1551 / Oshkosh).